The sequence spans 97 residues: Conotoxin Cal6.1b (97 aa).

The first 22 residues, methionine 1 to threonine 22, serve as a signal peptide directing secretion. Residues threonine 22 to threonine 46 form a disordered region. The propeptide occupies aspartate 23–serine 68. Intrachain disulfides connect cysteine 71/cysteine 87, cysteine 78/cysteine 91, and cysteine 86/cysteine 96.

The protein belongs to the conotoxin O1 superfamily. In terms of tissue distribution, expressed by the venom duct.

It localises to the secreted. In terms of biological role, probable neurotoxin with unknown target. Possibly targets ion channels. This is Conotoxin Cal6.1b from Californiconus californicus (California cone).